We begin with the raw amino-acid sequence, 241 residues long: Sugar fermentation stimulation protein homolog (241 aa).

It belongs to the SfsA family.

In Jannaschia sp. (strain CCS1), this protein is Sugar fermentation stimulation protein homolog.